We begin with the raw amino-acid sequence, 570 residues long: Peptidyl-prolyl cis-trans isomerase FKBP9 (570 aa).

The signal sequence occupies residues 1–24 (MAFGARGWRRWSLLLLLLWVTGQA). 4 PPIase FKBP-type domains span residues 54–142 (GDFV…VDIW), 166–254 (SDFV…LDLH), 278–365 (GDFL…IDFH), and 389–477 (GDYL…LELV). Asn174, Asn286, Asn302, and Asn397 each carry an N-linked (GlcNAc...) asparagine glycan. 2 consecutive EF-hand domains span residues 488–523 (WNGE…QVAS) and 533–568 (NAEM…TKHD). Residues Asp501, Asp503, Asn505, Glu507, Glu512, Asp546, Asn548, Asp550, Lys552, and Glu557 each contribute to the Ca(2+) site. Positions 567-570 (HDEL) match the Prevents secretion from ER motif.

In terms of processing, phosphorylated.

It localises to the endoplasmic reticulum lumen. The enzyme catalyses [protein]-peptidylproline (omega=180) = [protein]-peptidylproline (omega=0). Its activity is regulated as follows. Inhibited by FK506. In terms of biological role, PPIases accelerate the folding of proteins during protein synthesis. The chain is Peptidyl-prolyl cis-trans isomerase FKBP9 (Fkbp9) from Rattus norvegicus (Rat).